A 59-amino-acid polypeptide reads, in one-letter code: Large ribosomal subunit protein uL30 (59 aa).

Belongs to the universal ribosomal protein uL30 family. Part of the 50S ribosomal subunit.

The sequence is that of Large ribosomal subunit protein uL30 from Photorhabdus laumondii subsp. laumondii (strain DSM 15139 / CIP 105565 / TT01) (Photorhabdus luminescens subsp. laumondii).